We begin with the raw amino-acid sequence, 65 residues long: Large ribosomal subunit protein uL29 (65 aa).

It belongs to the universal ribosomal protein uL29 family.

The chain is Large ribosomal subunit protein uL29 from Desulforamulus reducens (strain ATCC BAA-1160 / DSM 100696 / MI-1) (Desulfotomaculum reducens).